Reading from the N-terminus, the 361-residue chain is G-protein coupled receptor 52 (361 aa).

Topologically, residues 1–44 are extracellular; it reads MNDSRWTEWRILNTSSGILNVSERHSCPLGFGHYSAVDVCIFET. Residues N2, N13, and N20 are each glycosylated (N-linked (GlcNAc...) asparagine). A helical membrane pass occupies residues 45–65; sequence IVIVLLTFLIIAGNLTVIFVF. Residues 66–87 lie on the Cytoplasmic side of the membrane; it reads HCAPLLHHYTTSYFIQTMAYAD. The chain crosses the membrane as a helical span at residues 88–108; it reads LFVGVSCLVPTLSLLHYSTGI. At 109 to 115 the chain is on the extracellular side; the sequence is HESLTCQ. C114 and C193 are oxidised to a cystine. A helical membrane pass occupies residues 116–136; that stretch reads VFGYIISVLKSVSMACLACIS. The Cytoplasmic segment spans residues 137–159; it reads VDRYLAITKPLSYNQLVTPCRLR. The chain crosses the membrane as a helical span at residues 160–180; it reads ICIILIWIYSCLIFLPSFFGW. Residues 181–200 lie on the Extracellular side of the membrane; sequence GKPGYHGDIFEWCATSWLTS. A helical membrane pass occupies residues 201–221; the sequence is AYFTGFIVCLLYAPAALVVCF. The Cytoplasmic portion of the chain corresponds to 222–265; the sequence is TYFHIFKICRQHTKEINDRRARFPSHEAAASRDAGHSPDRRYAM. The helical transmembrane segment at 266–286 threads the bilayer; the sequence is VLFRITSVFYMLWLPYIIYFL. Residues 287-296 are Extracellular-facing; that stretch reads LESSRVLDNP. The chain crosses the membrane as a helical span at residues 297–317; it reads TLSFLTTWLAISNSFCNCVIY. Residues 318–361 lie on the Cytoplasmic side of the membrane; it reads SLSNSVFRLGLRRLSETMCTSCMCVKDKEARDPKPRKRANSCSI.

Belongs to the G-protein coupled receptor 1 family.

It is found in the cell membrane. Functionally, G- protein coupled receptor activated by antipsychotics reserpine leading to an increase in intracellular cAMP and its internalization. May play a role in locomotor activity through modulation of dopamine, NMDA and ADORA2A-induced locomotor activity. These behavioral changes are accompanied by modulation of the dopamine receptor signaling pathway in striatum. Modulates HTT level via cAMP-dependent but PKA independent mechanisms throught activation of RAB39B that translocates HTT to the endoplasmic reticulum, thus avoiding proteasome degradation. The sequence is that of G-protein coupled receptor 52 from Bos taurus (Bovine).